A 961-amino-acid chain; its full sequence is Aconitate hydratase A (961 aa).

Residues Cys499, Cys565, and Cys568 each contribute to the [4Fe-4S] cluster site.

The protein belongs to the aconitase/IPM isomerase family. As to quaternary structure, monomer. The cofactor is [4Fe-4S] cluster.

It catalyses the reaction citrate = D-threo-isocitrate. The catalysed reaction is (2S,3R)-3-hydroxybutane-1,2,3-tricarboxylate = 2-methyl-cis-aconitate + H2O. It functions in the pathway carbohydrate metabolism; tricarboxylic acid cycle; isocitrate from oxaloacetate: step 2/2. It participates in organic acid metabolism; propanoate degradation. Its function is as follows. Involved in the catabolism of short chain fatty acids (SCFA) via the tricarboxylic acid (TCA)(acetyl degradation route) and probably via the 2-methylcitrate cycle I (propionate degradation route). Catalyzes the reversible isomerization of citrate to isocitrate via cis-aconitate. The apo form of AcnA functions as a RNA-binding regulatory protein. Could catalyze the hydration of 2-methyl-cis-aconitate to yield (2R,3S)-2-methylisocitrate. This chain is Aconitate hydratase A (acn), found in Mycobacterium avium.